Reading from the N-terminus, the 261-residue chain is Transmembrane protein 106A (261 aa).

The helical transmembrane segment at 95–115 threads the bilayer; it reads VFLAVSICLVTSSLIIFFLFP.

It belongs to the TMEM106 family.

The protein resides in the cell membrane. Functionally, activates macrophages and polarizes them into M1-like macrophages through the activation of the MAPK and NF-kappaB signaling pathway. Upon activation, up-regulates the expression of CD80, CD86, CD69 and MHC II on macrophages, and induces the release of pro-inflammatory cytokines such as TNF, IL1B, IL6, CCL2 and nitric oxide. May play a role in inhibition of proliferation and migration. The protein is Transmembrane protein 106A (TMEM106A) of Bos taurus (Bovine).